The primary structure comprises 195 residues: Adenylate kinase (195 aa).

10-15 (GAGKGT) is a binding site for ATP. Residues 30–59 (STGDMLRAAVAAGTPVGLKAKAVMDAGGLV) form an NMP region. Residues Thr31, Arg36, 57-59 (GLV), 85-88 (GFPR), and Gln92 each bind AMP. Residues 126–143 (NRAAEAQAKGEAVRKDDD) form an LID region. Arg127 contributes to the ATP binding site. An AMP-binding site is contributed by Arg150. Ala178 contacts ATP.

Belongs to the adenylate kinase family. Monomer.

Its subcellular location is the cytoplasm. It catalyses the reaction AMP + ATP = 2 ADP. It participates in purine metabolism; AMP biosynthesis via salvage pathway; AMP from ADP: step 1/1. Catalyzes the reversible transfer of the terminal phosphate group between ATP and AMP. Plays an important role in cellular energy homeostasis and in adenine nucleotide metabolism. The polypeptide is Adenylate kinase (Xanthobacter autotrophicus (strain ATCC BAA-1158 / Py2)).